The sequence spans 366 residues: Flagellar P-ring protein (366 aa).

The first 19 residues, 1–19 (MTLIRLLACLLFLPCLAQA), serve as a signal peptide directing secretion.

It belongs to the FlgI family. The basal body constitutes a major portion of the flagellar organelle and consists of four rings (L,P,S, and M) mounted on a central rod.

It localises to the periplasm. The protein localises to the bacterial flagellum basal body. Its function is as follows. Assembles around the rod to form the L-ring and probably protects the motor/basal body from shearing forces during rotation. This chain is Flagellar P-ring protein, found in Ruegeria pomeroyi (strain ATCC 700808 / DSM 15171 / DSS-3) (Silicibacter pomeroyi).